Reading from the N-terminus, the 419-residue chain is Fusaric acid cluster transcription factor FUB10 (419 aa).

A DNA-binding region (zn(2)-C6 fungal-type) is located at residues 16–47; sequence CDRCRAQKLRCHRDSGHSTDACLRCLKSGIEC. The disordered stretch occupies residues 50 to 92; that stretch reads SKARPTGRPPSRQVQPTVVVEQGDTSSSSHTTDSSPSAGGTDM. Residues 74-86 show a composition bias toward low complexity; it reads TSSSSHTTDSSPS.

The protein localises to the nucleus. Transcription factor that regulates the expression of the gene cluster that mediates the biosynthesis of fusaric acid, a mycotoxin with low to moderate toxicity to animals and humans, but with high phytotoxic properties. The sequence is that of Fusaric acid cluster transcription factor FUB10 from Gibberella fujikuroi (strain CBS 195.34 / IMI 58289 / NRRL A-6831) (Bakanae and foot rot disease fungus).